A 729-amino-acid polypeptide reads, in one-letter code: Phosphoribosylformylglycinamidine synthase subunit PurL (729 aa).

The active site involves histidine 54. ATP is bound by residues tyrosine 57 and lysine 96. Glutamate 98 is a Mg(2+) binding site. Substrate contacts are provided by residues 99-102 (SHNH) and arginine 121. Histidine 100 serves as the catalytic Proton acceptor. Residue aspartate 122 participates in Mg(2+) binding. Residue glutamine 245 participates in substrate binding. Aspartate 273 is a binding site for Mg(2+). 317 to 319 (ETQ) lines the substrate pocket. Aspartate 495 and glycine 532 together coordinate ATP. Asparagine 533 is a binding site for Mg(2+). Residue serine 535 coordinates substrate.

The protein belongs to the FGAMS family. Monomer. Part of the FGAM synthase complex composed of 1 PurL, 1 PurQ and 2 PurS subunits.

Its subcellular location is the cytoplasm. The catalysed reaction is N(2)-formyl-N(1)-(5-phospho-beta-D-ribosyl)glycinamide + L-glutamine + ATP + H2O = 2-formamido-N(1)-(5-O-phospho-beta-D-ribosyl)acetamidine + L-glutamate + ADP + phosphate + H(+). It participates in purine metabolism; IMP biosynthesis via de novo pathway; 5-amino-1-(5-phospho-D-ribosyl)imidazole from N(2)-formyl-N(1)-(5-phospho-D-ribosyl)glycinamide: step 1/2. Functionally, part of the phosphoribosylformylglycinamidine synthase complex involved in the purines biosynthetic pathway. Catalyzes the ATP-dependent conversion of formylglycinamide ribonucleotide (FGAR) and glutamine to yield formylglycinamidine ribonucleotide (FGAM) and glutamate. The FGAM synthase complex is composed of three subunits. PurQ produces an ammonia molecule by converting glutamine to glutamate. PurL transfers the ammonia molecule to FGAR to form FGAM in an ATP-dependent manner. PurS interacts with PurQ and PurL and is thought to assist in the transfer of the ammonia molecule from PurQ to PurL. The polypeptide is Phosphoribosylformylglycinamidine synthase subunit PurL (Staphylococcus epidermidis (strain ATCC 35984 / DSM 28319 / BCRC 17069 / CCUG 31568 / BM 3577 / RP62A)).